The chain runs to 97 residues: Putative membrane protein insertion efficiency factor (97 aa).

Residues V77–P97 are disordered. Residues S85–P97 are compositionally biased toward low complexity.

It belongs to the UPF0161 family.

Its subcellular location is the cell inner membrane. Its function is as follows. Could be involved in insertion of integral membrane proteins into the membrane. This is Putative membrane protein insertion efficiency factor from Xanthomonas euvesicatoria pv. vesicatoria (strain 85-10) (Xanthomonas campestris pv. vesicatoria).